Consider the following 376-residue polypeptide: Phytanoyl-CoA hydroxylase-interacting protein-like (376 aa).

The Fibronectin type-III domain maps to 52-161 (VPHNIKISNI…EIIEFCTADY (110 aa)).

The protein belongs to the PHYHIP family.

Functionally, may play a role in the development of the central system. This is Phytanoyl-CoA hydroxylase-interacting protein-like (phyhipl) from Xenopus tropicalis (Western clawed frog).